The following is a 74-amino-acid chain: Porwaprin-a (74 aa).

Residues 1–24 (MSSGGLLLLLGLLTLWEVLTPVSS) form the signal peptide. Positions 27–71 (RPKKLGLCPPRPQKPCVKECKNDWSCPGQQKCCNYGCIDECRDPI) constitute a WAP domain. Intrachain disulfides connect C34-C59, C42-C63, C46-C58, and C52-C67.

The protein belongs to the venom waprin family. As to expression, expressed by the venom gland.

The protein resides in the secreted. Damages membranes of susceptible bacteria. Has no hemolytic activity. Not toxic to mice. Does not inhibit the proteinases elastase and cathepsin G. The chain is Porwaprin-a from Pseudechis porphyriacus (Red-bellied black snake).